The following is a 653-amino-acid chain: MRAGRGATPARELFRDAAFPAADSSLFCDLSTPLAQFREDITWRRPQEICAMPRLFPDDPQEGQVKQGLLGDCWFLCACAALQKSRHLLEQVIPPGQPSWADQEYQGSFTCRIWQFGRWVEVTTDDRLPCLAGRLCFSRCQREDVFWLPLLEKVYAKVHGSYEHLWAGQVADALVDLTGGLAERWSLKGVAGSGGQQDRLGRWEHRTCRQLLRLKDQSLISCSVLSPRAGARELGEFHAFIVSDLRELQDQAGQSILLLRIQNPWGRRCWQGLWREGGEGWSQVDAAVTSELLSQLQEGEFWVEEEEFLREFDEITIGYPITEAGHLQSLYTEKLLCHTRALPGAWVKGQSAGGCRNNSGFPSNPKFWLRVSEPSEVYIAVLQRSRLRAVDWAGRARALVGDSHTSWSPASIPGKHYQAVGLHLWKVEKRRVNLPRVLSTPPVAGTACHAYDREVHLRCELSPGYYLAVPSTFLKDAPGEFLLRVFSTGRVSLSAIRAVAKNASPRAALPAGEWGTVQLRGSWRAGQTAGGSRNFASYPTNPCFPFSVPEGPGPRCVRITLHQHCQPRDTEFHPIGFHIFQVPEGGRSQDAPPLLLQEPLLSCVPHRYAQEVSQLCLLPPGTYRVVPSTYLPDTEGAFTVTIATRIDRSPSWQ.

The 309-residue stretch at L13–I321 folds into the Calpain catalytic domain. Active-site residues include C73, H238, and N263. 2 domain III regions span residues T322–S494 and E513–Q653.

It belongs to the peptidase C2 family.

Its function is as follows. Calcium-regulated non-lysosomal thiol-protease which catalyzes limited proteolysis of substrates involved in cytoskeletal remodeling and signal transduction. May play a role in insulin-stimulated glucose uptake. The polypeptide is Calpain-10 (CAPN10) (Macaca fascicularis (Crab-eating macaque)).